Here is a 383-residue protein sequence, read N- to C-terminus: Corticosteroid-binding globulin (383 aa).

N74 and N154 each carry an N-linked (GlcNAc...) asparagine glycan. Q232 contributes to the cortisol binding site. N-linked (GlcNAc...) asparagine glycosylation occurs at N238. Q264 serves as a coordination point for cortisol. N-linked (GlcNAc...) asparagine glycosylation is present at N308. Position 371 (W371) interacts with cortisol.

It belongs to the serpin family. In terms of tissue distribution, produced and secreted by hepatocytes, but has also been identified in a number of glycocorticoid responsive cells (it is found in maternal lung, spleen, and ovary and fetal kidney).

The protein resides in the secreted. Functionally, major transport protein for glucocorticoids and progestins in the blood of almost all vertebrate species. The sequence is that of Corticosteroid-binding globulin (SERPINA6) from Oryctolagus cuniculus (Rabbit).